We begin with the raw amino-acid sequence, 407 residues long: Phosphoglycerate kinase (407 aa).

Substrate contacts are provided by residues 27 to 29, R43, 66 to 69, R125, and R165; these read DLN and HLGR. Residues K215, G303, E334, and 363–366 each bind ATP; that span reads GGDS.

The protein belongs to the phosphoglycerate kinase family. In terms of assembly, monomer.

It localises to the cytoplasm. The catalysed reaction is (2R)-3-phosphoglycerate + ATP = (2R)-3-phospho-glyceroyl phosphate + ADP. It participates in carbohydrate degradation; glycolysis; pyruvate from D-glyceraldehyde 3-phosphate: step 2/5. The polypeptide is Phosphoglycerate kinase (Mycobacterium sp. (strain JLS)).